The primary structure comprises 1170 residues: Structural maintenance of chromosomes protein 2 (1170 aa).

32 to 39 (GLNGSGKS) provides a ligand contact to ATP. A coiled-coil region spans residues 172–469 (KMFEDRREKA…DKLRARLVEY (298 aa)). The 119-residue stretch at 523-641 (VHGVVGQLFQ…CEDPETAKKI (119 aa)) folds into the SMC hinge domain. Positions 678–1027 (VDIQKYNQIQ…ISKLNEYKRE (350 aa)) form a coiled coil.

This sequence belongs to the SMC family. SMC2 subfamily. Forms a heterodimer with SMC4. Component of the condensin complex, which contains the SMC2 and SMC4 heterodimer, and three non SMC subunits that probably regulate the complex: BRN1, YCS4 and YCG1/YCS5.

The protein localises to the nucleus. Its subcellular location is the cytoplasm. The protein resides in the chromosome. Its function is as follows. Central component of the condensin complex, a complex required for conversion of interphase chromatin into mitotic-like condense chromosomes. The condensin complex probably introduces positive supercoils into relaxed DNA in the presence of type I topoisomerases and converts nicked DNA into positive knotted forms in the presence of type II topoisomerases. The protein is Structural maintenance of chromosomes protein 2 (SMC2) of Saccharomyces cerevisiae (strain ATCC 204508 / S288c) (Baker's yeast).